The following is a 1039-amino-acid chain: MQVMPPNPGGGPSRLFILRPVATTLLMVAILLAGIIGYRALPVSALPEVDYPTIQVVTLYPGASPDVVTSAITAPLERQFGQMSGLKQMASQSSGGASVVTLQFQLELPLDVAEQEVQAAINSATNLLPSDLPYPPIYSKVNPADPPILTLAVTSSAMPMTQVEDMVETRVAQKISQVTGVGLVTISGGQRPAVRVKLNAAAVAAYGLDSETIRTAISNANVNSAKGSLDGPTRSVTLSANDQMKSADDYRQLIVAYQNGAAIRLQDIATIEQGAENTRLAAWANKQPAIVLNIQRQPGVNVITTADSIREMLPQLIKSLPKSVDVKVLTDRTTTIRASVSDVQFELLLAVALVVMVIYVFLRNVPATIIPSVAVPLSLIGTFAAMYFLGFSINNLTLMALTIATGFVVDDAIVVIENISRYIEKGEKPLDAALKGAGEIGFTIISLTFSLVAVLIPLLFMGDIVGRLFREFAVTLAVAILISAVVSLTLTPMMCARMLSHESLRKQNRFSAASERFFDRVIARYGKWLKTVLNHPWLTLGVAFSTLLLTVLLYLLIPKGFFPVQDNGIIQGTLEAPQSVSFSNMAERQQQVAAEILKDPAVESLTSFVGVDGTNATLNSGRLQINLKPLSERSERIPAIITRLQQMSTQFPGVKLYLQPVQDLTIDTQVSRTQYQFTLQAMSLDDLSLWVPKLMAELQQTPQLADVTSNWQDQGLVAYVNVDRDSASRLGISMSDVDNALYNAFGQRLISTIYTQANQYRVVLEHDVSTTPGLAALNDIRLTSSNGTIVPLSTIAKIEQRFGPLSVNHLDQFPAATISFNVAGNYSLGEAVDAITLAEKNLNLPKDITTQFQGATLAFQAALGGTLWLILAAVVAMYIVLGVLYESFIHPVTILSTLPTAGVGALLALMMAGSELDVIAIIGIILLIGIVKKNAIMMIDFALAAEREQGMTPYDAIYQACLLRFRPILMTTLAALLGALPLMLSTGVGAELRHPLGVCMVGGLVMSQILTLFTTPVIYLLFDKLARNTRRQPDAQELP.

12 helical membrane-spanning segments follow: residues 16–36, 342–362, 373–393, 396–416, 440–460, 472–492, 537–557, 863–883, 888–908, 911–931, 968–988, and 1002–1022; these read FILR…AGII, DVQF…YVFL, VAVP…GFSI, LTLM…IVVI, IGFT…PLLF, FAVT…TLTP, WLTL…YLLI, LGGT…VLGV, FIHP…ALLA, MAGS…IGIV, ILMT…STGV, and GGLV…YLLF.

It belongs to the resistance-nodulation-cell division (RND) (TC 2.A.6) family. MdtB subfamily. In terms of assembly, part of a tripartite efflux system composed of MdtA, MdtB and MdtC. MdtB forms a heteromultimer with MdtC.

It is found in the cell inner membrane. The chain is Multidrug resistance protein MdtB from Serratia proteamaculans (strain 568).